We begin with the raw amino-acid sequence, 353 residues long: Photosystem II protein D1 (353 aa).

An N-acetylthreonine modification is found at threonine 2. Threonine 2 is subject to Phosphothreonine. Helical transmembrane passes span 29–46, 118–133, and 142–156; these read YIGW…TATS, HFLL…EWEL, and WIAV…AATA. Residue histidine 118 coordinates chlorophyll a. Tyrosine 126 provides a ligand contact to pheophytin a. Aspartate 170 and glutamate 189 together coordinate [CaMn4O5] cluster. The helical transmembrane segment at 197-218 threads the bilayer; the sequence is FHMLGVAGVFGGSLFSAMHGSL. Residue histidine 198 coordinates chlorophyll a. Residues histidine 215 and 264-265 contribute to the a quinone site; that span reads SF. Histidine 215 is a binding site for Fe cation. Histidine 272 provides a ligand contact to Fe cation. Residues 274-288 form a helical membrane-spanning segment; it reads LLAAWPVVGIWFTAL. Positions 332, 333, 342, and 344 each coordinate [CaMn4O5] cluster. Residues 345 to 353 constitute a propeptide that is removed on maturation; that stretch reads AVEAPSTNG.

The protein belongs to the reaction center PufL/M/PsbA/D family. As to quaternary structure, PSII is composed of 1 copy each of membrane proteins PsbA, PsbB, PsbC, PsbD, PsbE, PsbF, PsbH, PsbI, PsbJ, PsbK, PsbL, PsbM, PsbT, PsbX, PsbY, PsbZ, Psb30/Ycf12, at least 3 peripheral proteins of the oxygen-evolving complex and a large number of cofactors. It forms dimeric complexes. The D1/D2 heterodimer binds P680, chlorophylls that are the primary electron donor of PSII, and subsequent electron acceptors. It shares a non-heme iron and each subunit binds pheophytin, quinone, additional chlorophylls, carotenoids and lipids. D1 provides most of the ligands for the Mn4-Ca-O5 cluster of the oxygen-evolving complex (OEC). There is also a Cl(-1) ion associated with D1 and D2, which is required for oxygen evolution. The PSII complex binds additional chlorophylls, carotenoids and specific lipids. serves as cofactor. Tyr-161 forms a radical intermediate that is referred to as redox-active TyrZ, YZ or Y-Z. Post-translationally, C-terminally processed by CTPA; processing is essential to allow assembly of the oxygen-evolving complex and thus photosynthetic growth.

It is found in the plastid. It localises to the chloroplast thylakoid membrane. The enzyme catalyses 2 a plastoquinone + 4 hnu + 2 H2O = 2 a plastoquinol + O2. In terms of biological role, photosystem II (PSII) is a light-driven water:plastoquinone oxidoreductase that uses light energy to abstract electrons from H(2)O, generating O(2) and a proton gradient subsequently used for ATP formation. It consists of a core antenna complex that captures photons, and an electron transfer chain that converts photonic excitation into a charge separation. The D1/D2 (PsbA/PsbD) reaction center heterodimer binds P680, the primary electron donor of PSII as well as several subsequent electron acceptors. This chain is Photosystem II protein D1, found in Dioscorea elephantipes (Elephant's foot yam).